Consider the following 450-residue polypeptide: Salicylate synthase (450 aa).

Residue E252 is the Proton donor of the active site. 270-271 (GT) is a substrate binding site. E297 is a Mg(2+) binding site. Residues Y385, R405, and 419–421 (GAG) each bind substrate. Mg(2+)-binding residues include E431 and E434. K438 provides a ligand contact to substrate.

This sequence belongs to the anthranilate synthase component I family. Salicylate synthase subfamily. In terms of assembly, monomer. Mg(2+) is required as a cofactor.

The catalysed reaction is chorismate = isochorismate. The enzyme catalyses isochorismate = salicylate + pyruvate. It carries out the reaction chorismate = prephenate. Its pathway is siderophore biosynthesis; mycobactin biosynthesis. Its function is as follows. Involved in the incorporation of salicylate into the virulence-conferring salicylate-based siderophore mycobactin. Catalyzes the initial conversion of chorismate to yield the intermediate isochorismate (isochorismate synthase activity), and the subsequent elimination of the enolpyruvyl side chain in a lyase reaction to give salicylate (isochorismate pyruvate-lyase activity). In the absence of magnesium, MbtI displays a chorismate mutase activity and converts chorismate to prephenate. In Mycolicibacterium paratuberculosis (strain ATCC BAA-968 / K-10) (Mycobacterium paratuberculosis), this protein is Salicylate synthase (mbtI).